The sequence spans 300 residues: Transcription elongation factor A protein 2 (300 aa).

The TFIIS N-terminal domain occupies 6 to 83; the sequence is EEIARIARRL…KSWKKLLDAS (78 aa). A Glycyl lysine isopeptide (Lys-Gly) (interchain with G-Cter in ubiquitin) cross-link involves residue Lys-58. Phosphoserine occurs at positions 60 and 101. The segment at 84–131 is disordered; the sequence is DAKARERRRGGSLPTSSSKEASEAQDPSRKRPELPRMPSTPRITTFPP. The segment covering 103–117 has biased composition (basic and acidic residues); sequence EASEAQDPSRKRPEL. In terms of domain architecture, TFIIS central spans 139-255; that stretch reads VRTKCREMLT…EHQMARTGGT (117 aa). A TFIIS-type zinc finger spans residues 258–298; sequence DLFTCGKCRKKNCTYTQVQTRSSDEPMTTFVVCNECGNRWK. Zn(2+) contacts are provided by Cys-262, Cys-265, Cys-290, and Cys-293.

This sequence belongs to the TFS-II family. Interacts with the basal transcription factor GTF2B. Interacts with REXO1.

The protein localises to the nucleus. Its function is as follows. Necessary for efficient RNA polymerase II transcription elongation past template-encoded arresting sites. The arresting sites in DNA have the property of trapping a certain fraction of elongating RNA polymerases that pass through, resulting in locked ternary complexes. Cleavage of the nascent transcript by S-II allows the resumption of elongation from the new 3'-terminus. The chain is Transcription elongation factor A protein 2 (TCEA2) from Bos taurus (Bovine).